We begin with the raw amino-acid sequence, 263 residues long: Small ribosomal subunit protein eS4 (263 aa).

The S4 RNA-binding domain maps to 42-104 (LPLIIFLRNR…TGEHFRLVYD (63 aa)).

The protein belongs to the eukaryotic ribosomal protein eS4 family. As to quaternary structure, component of the small ribosomal subunit.

It localises to the cytoplasm. Component of the small ribosomal subunit. The ribosome is a large ribonucleoprotein complex responsible for the synthesis of proteins in the cell. In Xenopus laevis (African clawed frog), this protein is Small ribosomal subunit protein eS4 (rps4).